The chain runs to 172 residues: Pre-intermoult gene 1 protein (172 aa).

The N-terminal stretch at 1–22 (MKLTKLWLLFVCLGLFVTLVVS) is a signal peptide. Over residues 25 to 45 (TDSDADSDSSADSDSSADSDE) the composition is skewed to acidic residues. The disordered stretch occupies residues 25–172 (TDSDADSDSS…RRNNNSRRRG (148 aa)). 3 consecutive repeat copies span residues 27–32 (SDADSD), 33–38 (SSADSD), and 39–44 (SSADSD). The segment at 27–44 (SDADSDSSADSDSSADSD) is 3 X 6 AA tandem repeats of S-S-A-D-S-D. Low complexity predominate over residues 55 to 77 (TSTTESSATNSSGSSDDASGSSS). Residues 78–95 (DVDDGSDDDTDSGSDTDY) are compositionally biased toward acidic residues. Residues 104–172 (VKKRANRKKA…RRNNNSRRRG (69 aa)) are compositionally biased toward basic residues.

As to expression, low expression in first to third instar larvae salivary glands.

The sequence is that of Pre-intermoult gene 1 protein (Pig1) from Drosophila melanogaster (Fruit fly).